The following is a 527-amino-acid chain: Putative GTP-binding protein 6 (527 aa).

Residues 306–470 form the Hflx-type G domain; that stretch reads PIISILGYTN…QVETAVMKST (165 aa). GTP is bound by residues 312–319, 338–342, 360–363, 429–432, and 448–450; these read GYTNSGKT, FATLD, DTIG, NKID, and SAL. Residues Thr319 and Thr340 each coordinate Mg(2+).

Belongs to the TRAFAC class OBG-HflX-like GTPase superfamily. HflX GTPase family. Mg(2+) is required as a cofactor.

The protein is Putative GTP-binding protein 6 (gtpbp6) of Xenopus laevis (African clawed frog).